Here is a 290-residue protein sequence, read N- to C-terminus: ATP phosphoribosyltransferase (290 aa).

The protein belongs to the ATP phosphoribosyltransferase family. Long subfamily. Requires Mg(2+) as cofactor.

It localises to the cytoplasm. It carries out the reaction 1-(5-phospho-beta-D-ribosyl)-ATP + diphosphate = 5-phospho-alpha-D-ribose 1-diphosphate + ATP. It functions in the pathway amino-acid biosynthesis; L-histidine biosynthesis; L-histidine from 5-phospho-alpha-D-ribose 1-diphosphate: step 1/9. Its activity is regulated as follows. Feedback inhibited by histidine. Its function is as follows. Catalyzes the condensation of ATP and 5-phosphoribose 1-diphosphate to form N'-(5'-phosphoribosyl)-ATP (PR-ATP). Has a crucial role in the pathway because the rate of histidine biosynthesis seems to be controlled primarily by regulation of HisG enzymatic activity. This is ATP phosphoribosyltransferase (hisG) from Saccharolobus solfataricus (strain ATCC 35092 / DSM 1617 / JCM 11322 / P2) (Sulfolobus solfataricus).